Here is an 822-residue protein sequence, read N- to C-terminus: Telomere length regulation protein TEL2 homolog (822 aa).

The disordered stretch occupies residues 442 to 504 (NDDEEEQPDA…ADQEKKKSAP (63 aa)). Polar residues predominate over residues 465–477 (VSSQSVASDPGNG). The segment covering 480-489 (SELDSDDDLT) has biased composition (acidic residues).

It belongs to the TEL2 family.

Its subcellular location is the cytoplasm. The protein localises to the membrane. It localises to the nucleus. Its function is as follows. Regulator of the DNA damage response (DDR). Part of the TTT complex that is required to stabilize protein levels of the phosphatidylinositol 3-kinase-related protein kinase (PIKK) family proteins. Promotes assembly, stabilizes and maintains the activity of TORC complexes, which regulate cell growth and survival in response to nutrient and hormonal signals. May be involved in telomere length regulation. The sequence is that of Telomere length regulation protein TEL2 homolog (telo2) from Danio rerio (Zebrafish).